A 185-amino-acid chain; its full sequence is Ribosome-recycling factor (185 aa).

Belongs to the RRF family.

It localises to the cytoplasm. In terms of biological role, responsible for the release of ribosomes from messenger RNA at the termination of protein biosynthesis. May increase the efficiency of translation by recycling ribosomes from one round of translation to another. This is Ribosome-recycling factor from Hydrogenovibrio crunogenus (strain DSM 25203 / XCL-2) (Thiomicrospira crunogena).